The primary structure comprises 270 residues: MATHTSKRRIHRWENNELSEENSTIIYFPARGLMWTHFPFVLGICLEFVGYVLKIVFINSPSISTFIAQSVLLLIAPSLYALSIFMLFSKMARLILMEAYMLIPAKFSTVSFVVADMIGRVLQAVGGGLLSSWNSRNTGRILIIVGLFIQIFCYTFLTFSQLFLHYKMKATPSKIVRDSNEWFQYNFILLAGILLVNGRTIVRVVQFLMGLQSYIGQHEWCLYVFDTVLMFLLPLIFLATFRARNLFKLQDKSVNIQLNKLLDKESVSED.

Residues 1 to 37 (MATHTSKRRIHRWENNELSEENSTIIYFPARGLMWTH) lie on the Cytoplasmic side of the membrane. A helical transmembrane segment spans residues 38–58 (FPFVLGICLEFVGYVLKIVFI). At 59 to 65 (NSPSIST) the chain is on the extracellular side. The chain crosses the membrane as a helical span at residues 66 to 86 (FIAQSVLLLIAPSLYALSIFM). At 87–93 (LFSKMAR) the chain is on the cytoplasmic side. The chain crosses the membrane as a helical span at residues 94 to 114 (LILMEAYMLIPAKFSTVSFVV). At 115-140 (ADMIGRVLQAVGGGLLSSWNSRNTGR) the chain is on the extracellular side. A helical membrane pass occupies residues 141–161 (ILIIVGLFIQIFCYTFLTFSQ). At 162 to 181 (LFLHYKMKATPSKIVRDSNE) the chain is on the cytoplasmic side. A helical membrane pass occupies residues 182–202 (WFQYNFILLAGILLVNGRTIV). The Extracellular portion of the chain corresponds to 203–220 (RVVQFLMGLQSYIGQHEW). A helical transmembrane segment spans residues 221-241 (CLYVFDTVLMFLLPLIFLATF). Over 242–270 (RARNLFKLQDKSVNIQLNKLLDKESVSED) the chain is Cytoplasmic.

Belongs to the lipid-translocating exporter (LTE) (TC 9.A.26.1) family.

Its subcellular location is the membrane. This is an uncharacterized protein from Saccharomyces cerevisiae (strain ATCC 204508 / S288c) (Baker's yeast).